The primary structure comprises 119 residues: Gibberellin-regulated protein 9 (119 aa).

A signal peptide spans 1 to 24 (MKKMNVVAFVTLIISFLLLSQVLA).

This sequence belongs to the GASA family. In terms of processing, six disulfide bonds may be present.

It is found in the secreted. Gibberellin-regulated protein that may function in hormonal controlled steps of development such as seed germination, flowering and seed maturation. This is Gibberellin-regulated protein 9 (GASA9) from Arabidopsis thaliana (Mouse-ear cress).